We begin with the raw amino-acid sequence, 625 residues long: MSENLDNEGPKPMESCGQESSSALSCPTVSVPPAAPAALEEVEKEGAGAATGPGPQPGLYSYIRDDLFTSEIFKLELQNVPRHASFSDVRRFLGRFGLQPHKTKLFGQPPCAFVTFRSAAERDKALRVLHGALWKGRPLSVRLARPKADPMARRRRQEGESEPPVTRVADVVTPLWTVPYAEQLERKQLECEQVLQKLAKEIGSTNRALLPWLLEQRHKHNKACCPLEGVRPSPQQTEYRNKCEFLVGVGVDGEDNTVGCRLGKYKGGTCAVAAPFDTVHIPEATKQVVKAFQEFIRSTPYSAYDPETYTGHWKQLTVRTSRRHQAMAIAYFHPQKLSPEELAELKTSLAQHFTAGPGRASGVTCLYFVEEGQRKTPSQEGLPLEHVAGDRCIHEDLLGLTFRISPHAFFQVNTPAAEVLYTVIQDWAQLDAGSMVLDVCCGTGTIGLALARKVKRVIGVELCPEAVEDARVNAQDNELSNVEFHCGRAEDLVPTLVSRLASQHLVAILDPPRAGLHSKVILAIRRAKNLRRLLYVSCNPRAAMGNFVDLCRAPSNRVKGIPFRPVKAVAVDLFPQTPHCEMLILFERVEHPNGTGVLGPHSPPAQPTPGPPDNTLQETGTFPSS.

Disordered regions lie at residues 1 to 37 (MSEN…AAPA) and 145 to 165 (RPKA…EPPV). Over residues 27 to 37 (PTVSVPPAAPA) the composition is skewed to low complexity. The 74-residue stretch at 73–146 (FKLELQNVPR…RPLSVRLARP (74 aa)) folds into the RRM domain. Positions 180 to 209 (YAEQLERKQLECEQVLQKLAKEIGSTNRAL) form a coiled coil. At serine 378 the chain carries Phosphoserine. Positions 411, 461, and 510 each coordinate S-adenosyl-L-methionine. Residue cysteine 538 is the Nucleophile of the active site. Catalysis depends on glutamate 581, which acts as the Proton acceptor. The disordered stretch occupies residues 594 to 625 (GTGVLGPHSPPAQPTPGPPDNTLQETGTFPSS). Positions 601–612 (HSPPAQPTPGPP) are enriched in pro residues. A Phosphoserine modification is found at serine 602. Residues 614–625 (NTLQETGTFPSS) show a composition bias toward polar residues.

Belongs to the class I-like SAM-binding methyltransferase superfamily. RNA M5U methyltransferase family.

It localises to the cytoplasm. The protein localises to the cytosol. It carries out the reaction uridine(54) in tRNA + S-adenosyl-L-methionine = 5-methyluridine(54) in tRNA + S-adenosyl-L-homocysteine + H(+). It catalyses the reaction a uridine in mRNA + S-adenosyl-L-methionine = a 5-methyluridine in mRNA + S-adenosyl-L-homocysteine + H(+). In terms of biological role, S-adenosyl-L-methionine-dependent methyltransferase that catalyzes the formation of 5-methyl-uridine in tRNAs and some mRNAs. Mainly catalyzes the methylation of uridine at position 54 (m5U54) in cytosolic tRNAs. Also able to mediate the formation of 5-methyl-uridine in some mRNAs. This Homo sapiens (Human) protein is tRNA (uracil-5-)-methyltransferase homolog A.